We begin with the raw amino-acid sequence, 554 residues long: Phenylalanine--tRNA ligase beta subunit (554 aa).

Residues 276 to 351 (LTLKSRIISI…INYGYEKFEG (76 aa)) enclose the B5 domain. Mg(2+)-binding residues include Asp-329, Asp-335, Glu-338, and Glu-339.

This sequence belongs to the phenylalanyl-tRNA synthetase beta subunit family. Type 2 subfamily. As to quaternary structure, tetramer of two alpha and two beta subunits. It depends on Mg(2+) as a cofactor.

It localises to the cytoplasm. It catalyses the reaction tRNA(Phe) + L-phenylalanine + ATP = L-phenylalanyl-tRNA(Phe) + AMP + diphosphate + H(+). This chain is Phenylalanine--tRNA ligase beta subunit, found in Methanococcus maripaludis (strain C7 / ATCC BAA-1331).